Here is a 206-residue protein sequence, read N- to C-terminus: Octanoyltransferase (206 aa).

Residues 30-206 (PETNDEIWLV…EFVTLLNNSI (177 aa)) enclose the BPL/LPL catalytic domain. Substrate-binding positions include 69–76 (RGGQVTYH), 137–139 (SLG), and 150–152 (GIA). The Acyl-thioester intermediate role is filled by C168.

Belongs to the LipB family.

The protein localises to the cytoplasm. The catalysed reaction is octanoyl-[ACP] + L-lysyl-[protein] = N(6)-octanoyl-L-lysyl-[protein] + holo-[ACP] + H(+). It participates in protein modification; protein lipoylation via endogenous pathway; protein N(6)-(lipoyl)lysine from octanoyl-[acyl-carrier-protein]: step 1/2. Its function is as follows. Catalyzes the transfer of endogenously produced octanoic acid from octanoyl-acyl-carrier-protein onto the lipoyl domains of lipoate-dependent enzymes. Lipoyl-ACP can also act as a substrate although octanoyl-ACP is likely to be the physiological substrate. This Francisella tularensis subsp. novicida (strain U112) protein is Octanoyltransferase.